Reading from the N-terminus, the 628-residue chain is Vacuolar-sorting receptor 4 (628 aa).

The signal sequence occupies residues 1-24; the sequence is MKQLLCYLPWLLLLSLVVSPFNEA. The Lumenal portion of the chain corresponds to 25–569; the sequence is RFVVEKNSLS…SKTGSQVKSA (545 aa). Positions 56–168 constitute a PA domain; the sequence is QYGGSMAGTV…GFGEKLKKAI (113 aa). N148, N294, and N434 each carry an N-linked (GlcNAc...) asparagine glycan. 2 consecutive EGF-like domains span residues 416–466 and 469–516; these read ETNE…SHCE and GPGR…KKCE. Intrachain disulfides connect C420/C438, C427/C447, C449/C465, C473/C493, C480/C501, C503/C515, and C545/C558. Residues 517-559 enclose the EGF-like 3; calcium-binding domain; the sequence is DINECKEKKACQCPECSCKNTWGSYECSCSGDLLYMRDHDTCI. Residues 570-590 form a helical membrane-spanning segment; the sequence is WAAVWLIMLSLGLAAAGAYLV. Over 591-628 the chain is Cytoplasmic; the sequence is YKYRLRQYMDSEIRAIMAQYMPLDSQPEVPNHTNDERA. A Tyrosine-based internalization motif motif is present at residues 610–613; the sequence is YMPL.

The protein belongs to the VSR (BP-80) family. Expressed at low levels in seeds, seedlings, roots, stems, leaves, flowers and siliques.

Its subcellular location is the membrane. The protein resides in the golgi apparatus membrane. It is found in the cytoplasmic vesicle. It localises to the clathrin-coated vesicle membrane. The protein localises to the prevacuolar compartment membrane. In terms of biological role, vacuolar-sorting receptor (VSR) involved in clathrin-coated vesicles sorting from Golgi apparatus to vacuoles. This chain is Vacuolar-sorting receptor 4 (VSR4), found in Arabidopsis thaliana (Mouse-ear cress).